Reading from the N-terminus, the 1983-residue chain is Nonribosomal peptide synthetase verP (1983 aa).

The interval 11–405 (FAQAASRCPD…FRGRKDRTVK (395 aa)) is adenylation 1. In terms of domain architecture, Carrier 1 spans 526 to 602 (DRHLDTLLTV…DVAPLITSRA (77 aa)). Position 563 is an O-(pantetheine 4'-phosphoryl)serine (S563). The tract at residues 769–1047 (ETDELTVVLT…GQHFKHALYS (279 aa)) is condensation 1. Residues 1089 to 1469 (QVMGQFPSLI…GRIDRLVKLR (381 aa)) form an adenylation 2 region. The Carrier 2 domain maps to 1584–1662 (ITRPKIEDKL…DQINMVRALL (79 aa)). Residue S1622 is modified to O-(pantetheine 4'-phosphoryl)serine. A condensation 2 region spans residues 1652-1976 (KDQINMVRAL…GGLEHPLFEC (325 aa)).

This sequence belongs to the NRP synthetase family.

Its pathway is mycotoxin biosynthesis. Its function is as follows. Nonribosomal peptide synthetase; part of the gene cluster that mediates the biosynthesis of 11'-deoxyverticillin A, one of the dimeric epipolythiodioxopiperazines (ETPs) from the verticillin family that act as mycotoxins. 11'-deoxyverticillin A is required for normal conidiation. The nonribosomal peptide synthetase verP is speculated to be responsible for condensation of amino acids to form the carbon skeleton of verticillin, whereas the cluster-specific tailoring enzymes are involved in further modifications leading to the production of 11'-deoxyverticillin A. This chain is Nonribosomal peptide synthetase verP, found in Clonostachys rogersoniana.